A 486-amino-acid polypeptide reads, in one-letter code: BTB/POZ domain and ankyrin repeat-containing protein NBCL (486 aa).

The 91-residue stretch at Ser-25 to Pro-115 folds into the BTB domain. The C2HC NPR-type zinc-finger motif lies at Arg-121–Ser-135. Residues Cys-124, Cys-129, His-131, and Cys-134 each contribute to the Zn(2+) site. 4 ANK repeats span residues Gln-257–Asp-286, Glu-287–Tyr-316, Ala-321–Val-350, and Asp-354–Leu-388. Disordered regions lie at residues Glu-403–Asn-441 and Gln-464–Tyr-486. 2 stretches are compositionally biased toward low complexity: residues Asn-406 to Thr-418 and Ser-432 to Asn-441. The segment covering Ser-466 to Asp-475 has biased composition (basic and acidic residues).

The protein belongs to the plant 'ANKYRIN-BTB/POZ' family. 'NOOT-BOP-COCH-like' (NBCL) subfamily. As to quaternary structure, homodimer.

The protein resides in the nucleus. Its subcellular location is the cytoplasm. It localises to the cell membrane. It functions in the pathway protein modification; protein ubiquitination. May act as a substrate-specific adapter of an E3 ubiquitin-protein ligase complex (CUL3-RBX1-BTB) which mediates the ubiquitination and subsequent proteasomal degradation of target proteins. Transcriptional co-regulator involved in the promotion of leaf and floral meristem fate and determinacy. Necessary for the development of stipules at the base of petioles. Required for the abscission of senescent organs, probably by regulating the cell wall disorganization in abscission zones (AZs, e.g. pulvini at the base of leaves). Promotes slightly root-cap border cells separation from the root tip. Involved in the coordination of the symbiotic nodule developmental program; promotes the formation of root nodules by interacting directly with APP1 to modulate the expression of the nuclear transcription factor Y subunit (NF-YA1), a key nodulin. Necessary for the robust maintenance of nodule identity throughout the nodule developmental program. This chain is BTB/POZ domain and ankyrin repeat-containing protein NBCL, found in Lupinus angustifolius (Narrow-leaved blue lupine).